We begin with the raw amino-acid sequence, 54 residues long: Secreted virulence factor MC69 (54 aa).

The N-terminal stretch at 1-16 is a signal peptide; that stretch reads MKAAFVLALCASLASA. A disulfide bridge links C36 with C46.

This sequence belongs to the MC69 virulence factor family.

It is found in the secreted. Functionally, secreted protein required for appressorial penetration of intact host epidermal cells and for pathogenicity. The polypeptide is Secreted virulence factor MC69 (Pyricularia oryzae (strain 70-15 / ATCC MYA-4617 / FGSC 8958) (Rice blast fungus)).